The primary structure comprises 431 residues: Urokinase-type plasminogen activator (431 aa).

Positions 1-20 are cleaved as a signal peptide; it reads MRALLARLLLCVLVVSDSKG. The 37-residue stretch at 27–63 folds into the EGF-like domain; it reads VPSNCDCLNGGTCVSNKYFSNIHWCNCPKKFGGQHCE. 6 disulfide bridges follow: cysteine 31–cysteine 39, cysteine 33–cysteine 51, cysteine 53–cysteine 62, cysteine 70–cysteine 151, cysteine 91–cysteine 133, and cysteine 122–cysteine 146. The interval 34–57 is binds urokinase plasminogen activator surface receptor; it reads LNGGTCVSNKYFSNIHWCNCPKKF. An O-linked (Fuc) threonine glycan is attached at threonine 38. The Kringle domain occupies 70–151; sequence CYEGNGHFYR…LVQECMVHDC (82 aa). Positions 152 to 177 are connecting peptide; that stretch reads ADGKKPSSPPEELKFQCGQKTLRPRF. Serine 158 is modified (phosphoserine). Disulfide bonds link cysteine 168/cysteine 299, cysteine 209/cysteine 225, cysteine 217/cysteine 288, cysteine 313/cysteine 382, cysteine 345/cysteine 361, and cysteine 372/cysteine 400. Residues 179–424 enclose the Peptidase S1 domain; sequence IIGGEFTTIE…FLPWIRSHTK (246 aa). Catalysis depends on charge relay system residues histidine 224 and aspartate 275. Asparagine 322 carries an N-linked (GlcNAc...) asparagine glycan. Serine 323 carries the phosphoserine modification. The Charge relay system role is filled by serine 376.

Belongs to the peptidase S1 family. As to quaternary structure, found in high and low molecular mass forms. Each consists of two chains, A and B. The high molecular mass form contains a long chain A which is cleaved to yield a short chain A. Forms heterodimer with SERPINA5. Binds LRP1B; binding is followed by internalization and degradation. Interacts with MRC2. Interacts with PLAUR. In complex with SERPINE1, interacts with PLAUR/uPAR. Interacts with SORL1 and LRP1, either alone or in complex with SERPINE1; these interactions are abolished in the presence of LRPAP1/RAP. The ternary complex composed of PLAUR-PLAU-PAI1 also interacts with SORLA. Post-translationally, phosphorylation of Ser-158 and Ser-323 abolishes proadhesive ability but does not interfere with receptor binding. In terms of processing, produced as an inactive single-chain protein (pro-uPA or sc-uPA), is processed into the active disulfide-linked two-chain form of PLAU/uPA by a proteolytic event mediated, at least, by TMPRSS4. Expressed in the prostate gland and prostate cancers.

It is found in the secreted. The catalysed reaction is Specific cleavage of Arg-|-Val bond in plasminogen to form plasmin.. With respect to regulation, inhibited by SERPINA5. Inhibited by SERPINE1. Its function is as follows. Specifically cleaves the zymogen plasminogen to form the active enzyme plasmin. The polypeptide is Urokinase-type plasminogen activator (Homo sapiens (Human)).